Here is a 336-residue protein sequence, read N- to C-terminus: Holliday junction branch migration complex subunit RuvB (336 aa).

The tract at residues 1 to 185 (MSIIVERLLS…FGVLSRVEYY (185 aa)) is large ATPase domain (RuvB-L). Residues L24, R25, G66, K69, T70, T71, 132–134 (EDF), R175, Y185, and R222 each bind ATP. T70 is a binding site for Mg(2+). Residues 186–256 (TVDQLSAIVE…ITQMALELLQ (71 aa)) form a small ATPAse domain (RuvB-S) region. A head domain (RuvB-H) region spans residues 259–336 (KLGLDHIDHK…EHFGMEIPKV (78 aa)). 2 residues coordinate DNA: R314 and R319.

It belongs to the RuvB family. In terms of assembly, homohexamer. Forms an RuvA(8)-RuvB(12)-Holliday junction (HJ) complex. HJ DNA is sandwiched between 2 RuvA tetramers; dsDNA enters through RuvA and exits via RuvB. An RuvB hexamer assembles on each DNA strand where it exits the tetramer. Each RuvB hexamer is contacted by two RuvA subunits (via domain III) on 2 adjacent RuvB subunits; this complex drives branch migration. In the full resolvosome a probable DNA-RuvA(4)-RuvB(12)-RuvC(2) complex forms which resolves the HJ.

The protein localises to the cytoplasm. The catalysed reaction is ATP + H2O = ADP + phosphate + H(+). In terms of biological role, the RuvA-RuvB-RuvC complex processes Holliday junction (HJ) DNA during genetic recombination and DNA repair, while the RuvA-RuvB complex plays an important role in the rescue of blocked DNA replication forks via replication fork reversal (RFR). RuvA specifically binds to HJ cruciform DNA, conferring on it an open structure. The RuvB hexamer acts as an ATP-dependent pump, pulling dsDNA into and through the RuvAB complex. RuvB forms 2 homohexamers on either side of HJ DNA bound by 1 or 2 RuvA tetramers; 4 subunits per hexamer contact DNA at a time. Coordinated motions by a converter formed by DNA-disengaged RuvB subunits stimulates ATP hydrolysis and nucleotide exchange. Immobilization of the converter enables RuvB to convert the ATP-contained energy into a lever motion, pulling 2 nucleotides of DNA out of the RuvA tetramer per ATP hydrolyzed, thus driving DNA branch migration. The RuvB motors rotate together with the DNA substrate, which together with the progressing nucleotide cycle form the mechanistic basis for DNA recombination by continuous HJ branch migration. Branch migration allows RuvC to scan DNA until it finds its consensus sequence, where it cleaves and resolves cruciform DNA. The chain is Holliday junction branch migration complex subunit RuvB from Bacillus cereus (strain ATCC 14579 / DSM 31 / CCUG 7414 / JCM 2152 / NBRC 15305 / NCIMB 9373 / NCTC 2599 / NRRL B-3711).